Reading from the N-terminus, the 565-residue chain is Small ribosomal subunit protein bS1 (565 aa).

6 S1 motif domains span residues 30–96 (SSVI…LSRD), 114–180 (NEKV…VSRR), 201–269 (GQVI…LGMK), 286–356 (NARF…LGLK), 373–443 (GSTV…LGVK), and 454–529 (GDVK…VSIK).

This sequence belongs to the bacterial ribosomal protein bS1 family. In terms of processing, the initiator methionine may be removed.

Functionally, binds mRNA; thus facilitating recognition of the initiation point. It is needed to translate mRNA with a short Shine-Dalgarno (SD) purine-rich sequence. This chain is Small ribosomal subunit protein bS1 (rpsA), found in Rhodopseudomonas palustris (strain ATCC BAA-98 / CGA009).